Here is a 268-residue protein sequence, read N- to C-terminus: MFRMLNSSFEDDPFFSESILAHRENMRQMIRSFSEPFGRDLLSISDGRGRAHNRRGHNDGEDSLTHTDVSSFQTMDQMVSNMRNYMQKLERNFGQLSVDPNGHSFCSSSVMTYSKIGDEPPKVFQASTQTRRAPGGIKETRKAMRDSDSGLEKMAIGHHIHDRAHVIKKSKNKKTGDEEVNQEFINMNESDAHAFDEEWQSEVLKYKPGRHNLGNTRMRSVGHENPGSRELKRREKPQQSPAIEHGRRSNVLGDKLHIKGSSVKSNKK.

Serine 8, serine 32, and serine 34 each carry phosphoserine. Disordered stretches follow at residues 44-66 (ISDG…SLTH) and 209-268 (GRHN…SNKK). The interval 50–125 (RAHNRRGHND…IGDEPPKVFQ (76 aa)) is interaction with COPS3. Basic and acidic residues-rich tracts occupy residues 56 to 65 (GHNDGEDSLT) and 226 to 237 (PGSRELKRREKP).

Belongs to the MLF family. In terms of assembly, interacts with CENPU. Also interacts with NRBP1/MADM, YWHAZ/14-3-3-zeta and HNRPUL2/MANP. NRBP1 recruits a serine kinase which phosphorylates both itself and MLF1. Phosphorylated MLF1 then binds to YWHAZ and is retained in the cytoplasm. Retained in the nucleus by binding to HNRPUL2. Binds to COPS3/CSN3 which is required for suppression of COP1 and activation of p53. Post-translationally, phosphorylation is required for binding to YWHAZ. As to expression, most abundant in testis, ovary, skeletal muscle, heart, kidney and colon. Low expression in spleen, thymus and peripheral blood leukocytes.

The protein localises to the cytoplasm. It localises to the nucleus. It is found in the cell projection. The protein resides in the cilium. Its subcellular location is the cytoskeleton. The protein localises to the cilium basal body. Functionally, involved in lineage commitment of primary hemopoietic progenitors by restricting erythroid formation and enhancing myeloid formation. Interferes with erythropoietin-induced erythroid terminal differentiation by preventing cells from exiting the cell cycle through suppression of CDKN1B/p27Kip1 levels. Suppresses COP1 activity via CSN3 which activates p53 and induces cell cycle arrest. Binds DNA and affects the expression of a number of genes so may function as a transcription factor in the nucleus. This chain is Myeloid leukemia factor 1 (MLF1), found in Homo sapiens (Human).